A 466-amino-acid chain; its full sequence is Argininosuccinate lyase (466 aa).

Positions 27, 114, and 159 each coordinate 2-(N(omega)-L-arginino)succinate. The active-site Proton acceptor is the His-160. Residue Ser-281 is the Proton donor of the active site. Residues Asn-289, Tyr-321, Gln-326, and Lys-329 each coordinate 2-(N(omega)-L-arginino)succinate.

It belongs to the lyase 1 family. Argininosuccinate lyase subfamily. As to quaternary structure, homotetramer. As to expression, eye lens.

It carries out the reaction 2-(N(omega)-L-arginino)succinate = fumarate + L-arginine. It participates in amino-acid biosynthesis; L-arginine biosynthesis; L-arginine from L-ornithine and carbamoyl phosphate: step 3/3. Delta crystallin, the principal crystallin in embryonic lens, is found only in birds and reptiles. This protein may also function as an enzymatically active argininosuccinate lyase. In Gallus gallus (Chicken), this protein is Argininosuccinate lyase (ASL2).